Reading from the N-terminus, the 160-residue chain is Transcription elongation factor GreA (160 aa).

The stretch at 1-72 (MAEKTYPMTL…QISSLETKIR (72 aa)) forms a coiled coil.

The protein belongs to the GreA/GreB family.

Its function is as follows. Necessary for efficient RNA polymerase transcription elongation past template-encoded arresting sites. The arresting sites in DNA have the property of trapping a certain fraction of elongating RNA polymerases that pass through, resulting in locked ternary complexes. Cleavage of the nascent transcript by cleavage factors such as GreA or GreB allows the resumption of elongation from the new 3'terminus. GreA releases sequences of 2 to 3 nucleotides. The chain is Transcription elongation factor GreA from Streptococcus pneumoniae serotype 4 (strain ATCC BAA-334 / TIGR4).